A 104-amino-acid polypeptide reads, in one-letter code: N(4)-acetylcytidine amidohydrolase (104 aa).

The 97-residue stretch at 6 to 102 (TFYTRFQQDI…ELYVIAFKKV (97 aa)) folds into the ASCH domain. Catalysis depends on lysine 20, which acts as the Proton acceptor. Threonine 23 serves as the catalytic Nucleophile. The active-site Proton donor is the glutamate 73.

This sequence belongs to the N(4)-acetylcytidine amidohydrolase family.

It carries out the reaction N(4)-acetylcytidine + H2O = cytidine + acetate + H(+). It catalyses the reaction N(4)-acetyl-2'-deoxycytidine + H2O = 2'-deoxycytidine + acetate + H(+). The enzyme catalyses N(4)-acetylcytosine + H2O = cytosine + acetate + H(+). Catalyzes the hydrolysis of N(4)-acetylcytidine (ac4C). This Cronobacter sakazakii (strain ATCC BAA-894) (Enterobacter sakazakii) protein is N(4)-acetylcytidine amidohydrolase.